A 150-amino-acid polypeptide reads, in one-letter code: Large ribosomal subunit protein bL9 (150 aa).

The protein belongs to the bacterial ribosomal protein bL9 family.

Its function is as follows. Binds to the 23S rRNA. The protein is Large ribosomal subunit protein bL9 of Neisseria gonorrhoeae (strain ATCC 700825 / FA 1090).